Consider the following 157-residue polypeptide: Regenerating islet-derived protein 4 (157 aa).

Residues 1–22 (MASKGVRLLLLLSWVAGPEVLS) form the signal peptide. An intrachain disulfide couples C29 to C40. One can recognise a C-type lectin domain in the interval 36-154 (YRSHCYGYFR…CANRQHFLCK (119 aa)). Residues N49 and N62 are each glycosylated (N-linked (GlcNAc...) asparagine). 2 cysteine pairs are disulfide-bonded: C57–C153 and C128–C145. A carbohydrate is bound by residues 97–102 (DPQKKQ) and 134–136 (KDK).

The protein localises to the secreted. Functionally, calcium-independent lectin displaying mannose-binding specificity and able to maintain carbohydrate recognition activity in an acidic environment. May be involved in inflammatory and metaplastic responses of the gastrointestinal epithelium. The chain is Regenerating islet-derived protein 4 (Reg4) from Mus musculus (Mouse).